Consider the following 474-residue polypeptide: bZIP transcription factor hapX (474 aa).

Positions 1–10 (MSTSAGTPTS) are enriched in polar residues. The disordered stretch occupies residues 1–82 (MSTSAGTPTS…RKAQNRAAQR (82 aa)). One can recognise a bZIP domain in the interval 67–108 (DTPPTKRKAQNRAAQRAFRERRAARVGELEEQIKKIEEENER). Residues 72-91 (KRKAQNRAAQRAFRERRAAR) are basic motif. Residues 95–102 (LEEQIKKI) are leucine-zipper. 3 disordered regions span residues 201–242 (QMQT…TDFT), 282–317 (EDQPSDRSNQPSQLTKLPPIQNISQFTPPPSEGDVL), and 429–449 (TLPNPQNLNPDRRRDQNLTNR). Residues 287-307 (DRSNQPSQLTKLPPIQNISQF) are compositionally biased toward polar residues.

The protein belongs to the bZIP family. YAP subfamily.

Its subcellular location is the nucleus. Iron regulator crucial for the adaptation to iron starvation and iron excess, but is dispensable for virulence. SreA represses the expression of hapX and the siderophore system during iron sufficient conditions by an iron-sensing mechanism, while hapX represses sreA and activates the siderophore system during iron-limiting conditions, resulting in efficient iron uptake and inhibition of iron-consuming pathways. HapX targets include genes encoding a number of key iron-regulated factors such as the vacuolar iron importer cccA, as well as hemA, cycA and lysF involved in heme biosynthesis, respiration and lysine biosynthesis, respectively. Activation of the vacuolar iron importer cccA during high iron conditions is essential for iron detoxification. The chain is bZIP transcription factor hapX from Arthroderma benhamiae (strain ATCC MYA-4681 / CBS 112371) (Trichophyton mentagrophytes).